A 336-amino-acid chain; its full sequence is Probable tRNA pseudouridine synthase B (336 aa).

The Nucleophile role is filled by Asp81. Residues 248–323 (LKKVVVKDSA…VAVDVERVYM (76 aa)) enclose the PUA domain.

The protein belongs to the pseudouridine synthase TruB family. Type 2 subfamily.

It carries out the reaction uridine(55) in tRNA = pseudouridine(55) in tRNA. Functionally, could be responsible for synthesis of pseudouridine from uracil-55 in the psi GC loop of transfer RNAs. The polypeptide is Probable tRNA pseudouridine synthase B (Methanocaldococcus jannaschii (strain ATCC 43067 / DSM 2661 / JAL-1 / JCM 10045 / NBRC 100440) (Methanococcus jannaschii)).